The following is an 87-amino-acid chain: Small ribosomal subunit protein uS15c (87 aa).

The protein belongs to the universal ribosomal protein uS15 family. In terms of assembly, part of the 30S ribosomal subunit.

The protein localises to the plastid. Its subcellular location is the chloroplast. This is Small ribosomal subunit protein uS15c (rps15) from Oenothera glazioviana (Large-flowered evening primrose).